The chain runs to 160 residues: Transcription elongation factor GreA (160 aa).

A coiled-coil region spans residues 1 to 31; that stretch reads MAEKTYPMTLEEKEKLEKELEELKLVRRPEI.

It belongs to the GreA/GreB family.

Necessary for efficient RNA polymerase transcription elongation past template-encoded arresting sites. The arresting sites in DNA have the property of trapping a certain fraction of elongating RNA polymerases that pass through, resulting in locked ternary complexes. Cleavage of the nascent transcript by cleavage factors such as GreA or GreB allows the resumption of elongation from the new 3'terminus. GreA releases sequences of 2 to 3 nucleotides. The chain is Transcription elongation factor GreA from Streptococcus suis (strain 98HAH33).